The chain runs to 64 residues: OPG024 protein (64 aa).

Residues Met1–Ile64 form a disordered region. Over residues Asn23 to Ser34 the composition is skewed to low complexity. The span at Val49–Ile64 shows a compositional bias: gly residues.

It belongs to the orthopoxvirus OPG024 family.

The polypeptide is OPG024 protein (OPG023) (Cynomys gunnisoni (Gunnison's prairie dog)).